We begin with the raw amino-acid sequence, 474 residues long: Trehalose-6-phosphate synthase (474 aa).

Position 10 (Arg10) interacts with D-glucose 6-phosphate. Gly22–Gly23 is a UDP-alpha-D-glucose binding site. D-glucose 6-phosphate contacts are provided by Tyr77 and Asp131. 2 residues coordinate UDP-alpha-D-glucose: Arg263 and Lys268. Arg301 is a D-glucose 6-phosphate binding site. UDP-alpha-D-glucose-binding positions include Phe340 and Leu366–Glu370.

Belongs to the glycosyltransferase 20 family. Homotetramer.

It carries out the reaction D-glucose 6-phosphate + UDP-alpha-D-glucose = alpha,alpha-trehalose 6-phosphate + UDP + H(+). Its pathway is glycan biosynthesis; trehalose biosynthesis. In terms of biological role, probably involved in the osmoprotection via the biosynthesis of trehalose. Catalyzes the transfer of glucose from UDP-alpha-D-glucose (UDP-Glc) to D-glucose 6-phosphate (Glc-6-P) to form trehalose-6-phosphate. Acts with retention of the anomeric configuration of the UDP-sugar donor. The protein is Trehalose-6-phosphate synthase of Pseudomonas savastanoi (Pseudomonas syringae pv. savastanoi).